Reading from the N-terminus, the 465-residue chain is Putative apoptosis inhibitor ORF106 (465 aa).

The stretch at 291-357 (RECSFSTWPK…MEKETCGWLE (67 aa)) is one BIR repeat. Acidic residues predominate over residues 373–382 (EGGEDKEEDG). Positions 373–393 (EGGEDKEEDGGGGGVIEFPKN) are disordered. The RING-type zinc-finger motif lies at 405–447 (CKACYERKADIAFIPCGHVFSCNICTMEMFASYKKKKRCPMCR).

The protein is Putative apoptosis inhibitor ORF106 of Magallana gigas (Pacific oyster).